We begin with the raw amino-acid sequence, 252 residues long: 3-dehydroquinate dehydratase (252 aa).

3-dehydroquinate-binding positions include 46 to 48 and Arg-82; that span reads EWR. The Proton donor/acceptor role is filled by His-143. Lys-170 (schiff-base intermediate with substrate) is an active-site residue. 3-dehydroquinate contacts are provided by Arg-212, Ser-231, and Gln-235.

Belongs to the type-I 3-dehydroquinase family. As to quaternary structure, homodimer.

The catalysed reaction is 3-dehydroquinate = 3-dehydroshikimate + H2O. The protein operates within metabolic intermediate biosynthesis; chorismate biosynthesis; chorismate from D-erythrose 4-phosphate and phosphoenolpyruvate: step 3/7. Involved in the third step of the chorismate pathway, which leads to the biosynthesis of aromatic amino acids. Catalyzes the cis-dehydration of 3-dehydroquinate (DHQ) and introduces the first double bond of the aromatic ring to yield 3-dehydroshikimate. The polypeptide is 3-dehydroquinate dehydratase (Listeria monocytogenes serotype 4b (strain F2365)).